Reading from the N-terminus, the 210-residue chain is Cytochrome c biogenesis ATP-binding export protein CcmA (210 aa).

Residues 3–205 form the ABC transporter domain; sequence LHLQAAGLAC…KPSGYRELNL (203 aa). 37–44 lines the ATP pocket; sequence GPNGSGKT.

The protein belongs to the ABC transporter superfamily. CcmA exporter (TC 3.A.1.107) family. As to quaternary structure, the complex is composed of two ATP-binding proteins (CcmA) and two transmembrane proteins (CcmB).

It localises to the cell inner membrane. It carries out the reaction heme b(in) + ATP + H2O = heme b(out) + ADP + phosphate + H(+). Part of the ABC transporter complex CcmAB involved in the biogenesis of c-type cytochromes; once thought to export heme, this seems not to be the case, but its exact role is uncertain. Responsible for energy coupling to the transport system. The polypeptide is Cytochrome c biogenesis ATP-binding export protein CcmA (Pseudomonas putida (strain GB-1)).